The sequence spans 284 residues: Cell wall mannoprotein 1 (284 aa).

The N-terminal stretch at 1–17 is a signal peptide; that stretch reads MRFSALLVTLGLTGALA. The segment covering 176–234 has biased composition (low complexity); it reads SSTGTASSSAPATETATATETSTATGTVTETATSTPVIPTGTASGSASATPSTTATPTT. A disordered region spans residues 176-252; the sequence is SSTGTASSSA…SSTGTATAST (77 aa).

This sequence belongs to the cell wall mannoprotein 1 family. Galactomannoprotein, glycosylated.

It localises to the secreted. The protein localises to the cell wall. In terms of biological role, constitutive protein of the cell wall. Antigen target of host humoral immune response. The sequence is that of Cell wall mannoprotein 1 from Aspergillus fumigatus (Neosartorya fumigata).